The following is a 128-amino-acid chain: Ribonuclease P protein component (128 aa).

Belongs to the RnpA family. Consists of a catalytic RNA component (M1 or rnpB) and a protein subunit.

The enzyme catalyses Endonucleolytic cleavage of RNA, removing 5'-extranucleotides from tRNA precursor.. In terms of biological role, RNaseP catalyzes the removal of the 5'-leader sequence from pre-tRNA to produce the mature 5'-terminus. It can also cleave other RNA substrates such as 4.5S RNA. The protein component plays an auxiliary but essential role in vivo by binding to the 5'-leader sequence and broadening the substrate specificity of the ribozyme. In Prochlorococcus marinus (strain MIT 9301), this protein is Ribonuclease P protein component.